Here is a 728-residue protein sequence, read N- to C-terminus: Probable ubiquitin-conjugating enzyme protein 17 (728 aa).

Positions 1–17 are enriched in low complexity; it reads MSSQASQRSSSTSAVAQ. Disordered regions lie at residues 1–23 and 123–155; these read MSSQASQRSSSTSAVAQKTRERR and SSRSADEQKRRARRNSSASLSHKGTGYGTGSTR. The UBC core domain maps to 402–568; it reads DRTKRIAKEL…IEHATLNYAI (167 aa). Cysteine 495 functions as the Glycyl thioester intermediate in the catalytic mechanism. Disordered stretches follow at residues 649–678 and 709–728; these read PFAKEEAEESERLKREQSEKEEKQKKEAAA and RTQPTGDYSVPSVNEPSTSS. A compositionally biased stretch (basic and acidic residues) spans 658 to 678; the sequence is SERLKREQSEKEEKQKKEAAA. The span at 710–728 shows a compositional bias: polar residues; the sequence is TQPTGDYSVPSVNEPSTSS.

Belongs to the ubiquitin-conjugating enzyme family.

This chain is Probable ubiquitin-conjugating enzyme protein 17 (ubc-17), found in Caenorhabditis elegans.